The chain runs to 304 residues: Uricase (304 aa).

N-acetylalanine is present on Ala2. 2 positions are modified to N6-acetyllysine; alternate: Lys10 and Lys23. Residues Lys10 and Lys23 each carry the N6-succinyllysine; alternate modification. The active-site Charge relay system is Lys23. An N6-acetyllysine mark is found at Lys27 and Lys36. A phosphoserine mark is found at Ser39 and Ser63. Catalysis depends on Thr68, which acts as the Charge relay system. Thr68 and Asp69 together coordinate urate. 3 positions are modified to N6-acetyllysine: Lys118, Lys122, and Lys164. Phe170 lines the urate pocket. Lys175 and Lys185 each carry N6-acetyllysine. Arg187 is a urate binding site. 2 positions are modified to N6-acetyllysine; alternate: Lys221 and Lys228. 2 positions are modified to N6-succinyllysine; alternate: Lys221 and Lys228. Ser232 bears the Phosphoserine mark. The urate site is built by Val235, Gln236, and Asn262. The active-site Charge relay system is His264. Lys278 carries the N6-acetyllysine modification. At Tyr289 the chain carries Phosphotyrosine. Positions 302 to 304 (SRL) match the Microbody targeting signal motif.

This sequence belongs to the uricase family.

It localises to the peroxisome. It carries out the reaction urate + O2 + H2O = 5-hydroxyisourate + H2O2. The protein operates within purine metabolism; urate degradation; (S)-allantoin from urate: step 1/3. Its function is as follows. Catalyzes the oxidation of uric acid to 5-hydroxyisourate, which is further processed to form (S)-allantoin. This is Uricase (UOX) from Macaca mulatta (Rhesus macaque).